Reading from the N-terminus, the 161-residue chain is Nucleotide-binding protein Spea_3114 (161 aa).

This sequence belongs to the YajQ family.

In terms of biological role, nucleotide-binding protein. The sequence is that of Nucleotide-binding protein Spea_3114 from Shewanella pealeana (strain ATCC 700345 / ANG-SQ1).